A 220-amino-acid chain; its full sequence is N-(5'-phosphoribosyl)anthranilate isomerase (220 aa).

The protein belongs to the TrpF family.

The catalysed reaction is N-(5-phospho-beta-D-ribosyl)anthranilate = 1-(2-carboxyphenylamino)-1-deoxy-D-ribulose 5-phosphate. Its pathway is amino-acid biosynthesis; L-tryptophan biosynthesis; L-tryptophan from chorismate: step 3/5. This chain is N-(5'-phosphoribosyl)anthranilate isomerase, found in Xylella fastidiosa (strain 9a5c).